The primary structure comprises 659 residues: Threonine--tRNA ligase (659 aa).

The 64-residue stretch at 7–70 (VQATVTVTFP…TDDATVEIIT (64 aa)) folds into the TGS domain. The tract at residues 255–557 (DHRKLGAELE…LIEHTAGNFP (303 aa)) is catalytic. 3 residues coordinate Zn(2+): cysteine 353, histidine 404, and histidine 534.

This sequence belongs to the class-II aminoacyl-tRNA synthetase family. As to quaternary structure, homodimer. It depends on Zn(2+) as a cofactor.

It localises to the cytoplasm. The catalysed reaction is tRNA(Thr) + L-threonine + ATP = L-threonyl-tRNA(Thr) + AMP + diphosphate + H(+). Functionally, catalyzes the attachment of threonine to tRNA(Thr) in a two-step reaction: L-threonine is first activated by ATP to form Thr-AMP and then transferred to the acceptor end of tRNA(Thr). Also edits incorrectly charged L-seryl-tRNA(Thr). The protein is Threonine--tRNA ligase of Chlorobium phaeobacteroides (strain BS1).